A 431-amino-acid chain; its full sequence is Histidinol dehydrogenase (431 aa).

The NAD(+) site is built by tyrosine 130, glutamine 191, and asparagine 214. Positions 237, 261, and 264 each coordinate substrate. Positions 261 and 264 each coordinate Zn(2+). Catalysis depends on proton acceptor residues glutamate 329 and histidine 330. Residues histidine 330, aspartate 363, glutamate 417, and histidine 422 each contribute to the substrate site. Zn(2+) is bound at residue aspartate 363. Histidine 422 is a Zn(2+) binding site.

It belongs to the histidinol dehydrogenase family. It depends on Zn(2+) as a cofactor.

It carries out the reaction L-histidinol + 2 NAD(+) + H2O = L-histidine + 2 NADH + 3 H(+). It participates in amino-acid biosynthesis; L-histidine biosynthesis; L-histidine from 5-phospho-alpha-D-ribose 1-diphosphate: step 9/9. Its function is as follows. Catalyzes the sequential NAD-dependent oxidations of L-histidinol to L-histidinaldehyde and then to L-histidine. The polypeptide is Histidinol dehydrogenase (Psychrobacter arcticus (strain DSM 17307 / VKM B-2377 / 273-4)).